A 305-amino-acid chain; its full sequence is Lipoyl synthase (305 aa).

Cysteine 41, cysteine 46, cysteine 52, cysteine 68, cysteine 72, cysteine 75, and serine 281 together coordinate [4Fe-4S] cluster. Residues 54–270 enclose the Radical SAM core domain; that stretch reads GARRTATFMI…RKVAMDKGFK (217 aa). The segment covering 283 to 298 has biased composition (basic and acidic residues); sequence HADEQVNEAAKEKQRQ. Positions 283 to 305 are disordered; the sequence is HADEQVNEAAKEKQRQGEAQLNS.

The protein belongs to the radical SAM superfamily. Lipoyl synthase family. The cofactor is [4Fe-4S] cluster.

The protein localises to the cytoplasm. It carries out the reaction [[Fe-S] cluster scaffold protein carrying a second [4Fe-4S](2+) cluster] + N(6)-octanoyl-L-lysyl-[protein] + 2 oxidized [2Fe-2S]-[ferredoxin] + 2 S-adenosyl-L-methionine + 4 H(+) = [[Fe-S] cluster scaffold protein] + N(6)-[(R)-dihydrolipoyl]-L-lysyl-[protein] + 4 Fe(3+) + 2 hydrogen sulfide + 2 5'-deoxyadenosine + 2 L-methionine + 2 reduced [2Fe-2S]-[ferredoxin]. It functions in the pathway protein modification; protein lipoylation via endogenous pathway; protein N(6)-(lipoyl)lysine from octanoyl-[acyl-carrier-protein]. Its function is as follows. Catalyzes the radical-mediated insertion of two sulfur atoms into the C-6 and C-8 positions of the octanoyl moiety bound to the lipoyl domains of lipoate-dependent enzymes, thereby converting the octanoylated domains into lipoylated derivatives. The polypeptide is Lipoyl synthase (Staphylococcus aureus (strain Mu3 / ATCC 700698)).